Reading from the N-terminus, the 397-residue chain is Protein Rep52 (397 aa).

The region spanning 84–239 (DPQYAASVFL…LDHDFGKVTK (156 aa)) is the SF3 helicase domain. 110-117 (GPATTGKT) serves as a coordination point for ATP. A disordered region spans residues 265–296 (GGAKKRPAPSDADISEPKRVRESVAQPSTSDA).

As to quaternary structure, homooligomer. Interacts with host PRKX.

Its subcellular location is the host nucleus. Plays a critical role during packaging of viral DNA into empty capsids, where they are thought to be part of the packaging motor complex. The single stranded genomic DNA is packaged in a 3' to 5' direction and requires the association between viral DNA and Rep40. Regulates host PKA activity by interacting with host PRKX as a mechanism to interfere with helper virus propagation and to promote its own replication. This is Protein Rep52 (Rep52) from Mammalia (AAV-2).